A 176-amino-acid chain; its full sequence is Late embryogenesis abundant protein 49 (176 aa).

SMP domains are found at residues 49–106 and 115–171; these read TTLT…RNQK and NLGD…KLNH.

The protein belongs to the LEA type SMP family.

The protein resides in the cytoplasm. It is found in the nucleus. In terms of biological role, LEA proteins are late embryonic proteins abundant in higher plant seed embryos. The function of those proteins is not known. In Arabidopsis thaliana (Mouse-ear cress), this protein is Late embryogenesis abundant protein 49.